Here is a 426-residue protein sequence, read N- to C-terminus: N-formyl-4-amino-5-aminomethyl-2-methylpyrimidine deformylase (426 aa).

The stretch at 1–31 forms a coiled coil; it reads MDQQIYSLQKKVEEHKEELIQLAKTLISYQT. Histidine 89 is a binding site for Zn(2+). Residue aspartate 91 is part of the active site. Aspartate 122 contacts Zn(2+). The active-site Proton acceptor is glutamate 156. The Zn(2+) site is built by glutamate 157, aspartate 180, and histidine 394.

This sequence belongs to the peptidase M20A family. The cofactor is Zn(2+). Requires Co(2+) as cofactor.

The enzyme catalyses N-formyl-4-amino-5-aminomethyl-2-methylpyrimidine + H2O = 4-amino-5-aminomethyl-2-methylpyrimidine + formate. It participates in cofactor biosynthesis; thiamine diphosphate biosynthesis. Catalyzes the deformylation of the formylaminopyrimidine N-formyl-4-amino-5-aminomethyl-2-methylpyrimidine (FAMP) to give the corresponding aminopyrimidine. This chain is N-formyl-4-amino-5-aminomethyl-2-methylpyrimidine deformylase, found in Bacillus subtilis (strain 168).